Reading from the N-terminus, the 366-residue chain is Flagellar P-ring protein (366 aa).

The signal sequence occupies residues 1–22; that stretch reads MFTRKSVILMAVLLIWSAVSYA.

Belongs to the FlgI family. In terms of assembly, the basal body constitutes a major portion of the flagellar organelle and consists of four rings (L,P,S, and M) mounted on a central rod.

It is found in the periplasm. Its subcellular location is the bacterial flagellum basal body. Functionally, assembles around the rod to form the L-ring and probably protects the motor/basal body from shearing forces during rotation. The polypeptide is Flagellar P-ring protein (Hydrogenovibrio crunogenus (strain DSM 25203 / XCL-2) (Thiomicrospira crunogena)).